A 389-amino-acid chain; its full sequence is Nicotinamide-nucleotide adenylyltransferase (389 aa).

A Nuclear localization signal motif is present at residues 380 to 383 (KKQK).

This sequence belongs to the eukaryotic NMN adenylyltransferase family. Abundantly expressed in neuronal and muscle cells. Present at relatively low levels at the neuromuscular junction. Expressed in the eye; present in photoreceptor cells and various neurons in the lamina cortex and medulla cortex and at low levels in the lamina.

The protein resides in the nucleus. It is found in the cytoplasm. It localises to the presynaptic active zone. The enzyme catalyses beta-nicotinamide D-ribonucleotide + ATP + H(+) = diphosphate + NAD(+). The catalysed reaction is nicotinate beta-D-ribonucleotide + ATP + H(+) = deamido-NAD(+) + diphosphate. It functions in the pathway cofactor biosynthesis; NAD(+) biosynthesis; NAD(+) from nicotinamide D-ribonucleotide: step 1/1. The protein operates within cofactor biosynthesis; NAD(+) biosynthesis; deamido-NAD(+) from nicotinate D-ribonucleotide: step 1/1. Its function is as follows. Catalyzes the formation of NAD(+) from nicotinamide mononucleotide (NMN) and ATP. Essential for viability. Stress-response chaperone protein that prevents toxic aggregation of proteins and promotes proteasome-mediated degradation of misfolded proteins; this is independent of its NAD(+) synthesis activity. Neuroprotective in response to toxic protein aggregation, for example by overexpressed Atx-1/ataxin-1. Required for maintenance and integrity of mature neurons, protecting them from neuronal activity-induced neurodegeneration. Required for the maintenance of axonal and dendritic integrity in both central and peripheral neurons. Chaperone function and neuroprotective roles are largely independent of NAD(+) synthesis activity. Functionally, catalyzes the formation of NAD(+) from nicotinamide mononucleotide (NMN) and ATP. Has, or stimulates, chaperone holdase activity but not refoldase activity. Does not have neuroprotective properties and may stimulate apoptosis and neurodegeneration in response to toxic protein aggregates. Catalyzes the formation of NAD(+) from nicotinamide mononucleotide (NMN) and ATP. Has, or stimulates, chaperone holdase and refoldase activity. Neuroprotective and reduces the toxic load of protein aggregates, preventing apoptosis and neurodegeneration. Promotes clearance of nuclear misfolded protein aggregates. This is Nicotinamide-nucleotide adenylyltransferase from Drosophila melanogaster (Fruit fly).